The following is a 664-amino-acid chain: Intraflagellar transport protein 70B (664 aa).

TPR repeat units lie at residues 11 to 44 (DGEF…SPRS), 45 to 78 (RAGL…HPEL), 153 to 186 (LDGQ…SGYR), 188 to 220 (DLSY…GIRQ), 385 to 418 (LTEQ…YEDT), 423 to 456 (IPVL…CNDH), and 458 to 491 (VWKL…HYDN). Positions 509 to 532 (MISQNEEAEELMRKIGKEEEQLSY) form a coiled coil. A TPR 8 repeat occupies 543–576 (CIVNLVIGTLYCAKGNYDFGISRVIKSLEPCNKK).

Belongs to the TTC30/dfy-1/fleer family. As to quaternary structure, interacts with the IFT B complex components IFT27, IFT46, IFT74, IFT52, IFT57, IFT80, IFT81 and IFT88. Interacts with KIF17.

Its subcellular location is the cell projection. It localises to the cilium. In terms of biological role, required for polyglutamylation of axonemal tubulin. Plays a role in anterograde intraflagellar transport (IFT), the process by which cilia precursors are transported from the base of the cilium to the site of their incorporation at the tip. The chain is Intraflagellar transport protein 70B (IFT70B) from Bos taurus (Bovine).